The chain runs to 79 residues: Sec-independent protein translocase protein TatA (79 aa).

Residues 1 to 21 (MGGFTSIWHWVIVLLVIVLLF) form a helical membrane-spanning segment. Positions 48–79 (EEEAKNEPKTLDAQVAQTKVHETSEIKSKQES) are disordered. Basic and acidic residues predominate over residues 66-79 (KVHETSEIKSKQES).

Belongs to the TatA/E family. The Tat system comprises two distinct complexes: a TatABC complex, containing multiple copies of TatA, TatB and TatC subunits, and a separate TatA complex, containing only TatA subunits. Substrates initially bind to the TatABC complex, which probably triggers association of the separate TatA complex to form the active translocon.

It localises to the cell inner membrane. Part of the twin-arginine translocation (Tat) system that transports large folded proteins containing a characteristic twin-arginine motif in their signal peptide across membranes. TatA could form the protein-conducting channel of the Tat system. The chain is Sec-independent protein translocase protein TatA from Helicobacter pylori (strain Shi470).